Here is a 186-residue protein sequence, read N- to C-terminus: MNTIRNSICLTIITMVLCGFLFPLAITLIGQIFFYQQANGSLITYDNRIVGSKLIGQHWTETRYFHGRPSAVDYNMNPEKLYKNGVSSGGSNESNGNTELIARMKHHVKFGNSNVTIDAATSSESGLDPHITVENALKQAPRIADARHVSTSRVADLIQHRKQRGVLTNDYVNVLELNIALDKMKD.

A helical transmembrane segment spans residues 10–30 (LTIITMVLCGFLFPLAITLIG).

This sequence belongs to the KdpC family. In terms of assembly, the system is composed of three essential subunits: KdpA, KdpB and KdpC.

It localises to the cell membrane. Functionally, part of the high-affinity ATP-driven potassium transport (or Kdp) system, which catalyzes the hydrolysis of ATP coupled with the electrogenic transport of potassium into the cytoplasm. This subunit acts as a catalytic chaperone that increases the ATP-binding affinity of the ATP-hydrolyzing subunit KdpB by the formation of a transient KdpB/KdpC/ATP ternary complex. The chain is Potassium-transporting ATPase KdpC subunit from Staphylococcus aureus (strain COL).